A 359-amino-acid chain; its full sequence is Sulfate/thiosulfate import ATP-binding protein CysA (359 aa).

Positions 3–237 constitute an ABC transporter domain; it reads VRVAGVRKEF…PNSPFVYGFI (235 aa). 35–42 contributes to the ATP binding site; it reads GPSGSGKT.

The protein belongs to the ABC transporter superfamily. Sulfate/tungstate importer (TC 3.A.1.6) family. As to quaternary structure, the complex is composed of two ATP-binding proteins (CysA), two transmembrane proteins (CysT and CysW) and a solute-binding protein (CysP).

Its subcellular location is the cell inner membrane. The catalysed reaction is sulfate(out) + ATP + H2O = sulfate(in) + ADP + phosphate + H(+). The enzyme catalyses thiosulfate(out) + ATP + H2O = thiosulfate(in) + ADP + phosphate + H(+). Part of the ABC transporter complex CysAWTP involved in sulfate/thiosulfate import. Responsible for energy coupling to the transport system. In Brucella melitensis biotype 1 (strain ATCC 23456 / CCUG 17765 / NCTC 10094 / 16M), this protein is Sulfate/thiosulfate import ATP-binding protein CysA.